The sequence spans 395 residues: Flap endonuclease 1 (395 aa).

Residues 1-104 (MGIKHLYQVI…GELAKRVARK (104 aa)) form an N-domain region. D34 contacts Mg(2+). Residues R47 and R70 each coordinate DNA. The Mg(2+) site is built by D86, E158, E160, D179, and D181. The segment at 122 to 253 (DIEKFSRRTV…TTALSLIKEH (132 aa)) is I-domain. E158 is a binding site for DNA. G231 and D233 together coordinate DNA. Residue D233 participates in Mg(2+) binding. The tract at residues 341 to 349 (QQSRLEGFF) is interaction with PCNA. The segment at 345–395 (LEGFFKPVARTEDEKASLKRKHDEKLQQQKKKKKEDAKAKKEAKAKPRGAA) is disordered. Basic and acidic residues-rich tracts occupy residues 353 to 371 (ARTE…EKLQ) and 378 to 389 (KEDAKAKKEAKA).

This sequence belongs to the XPG/RAD2 endonuclease family. FEN1 subfamily. As to quaternary structure, interacts with PCNA. Three molecules of fen1 bind to one PCNA trimer with each molecule binding to one PCNA monomer. PCNA stimulates the nuclease activity without altering cleavage specificity. Mg(2+) is required as a cofactor. Phosphorylated. Phosphorylation upon DNA damage induces relocalization to the nuclear plasma.

It is found in the nucleus. The protein resides in the nucleolus. It localises to the nucleoplasm. The protein localises to the mitochondrion. Its function is as follows. Structure-specific nuclease with 5'-flap endonuclease and 5'-3' exonuclease activities involved in DNA replication and repair. During DNA replication, cleaves the 5'-overhanging flap structure that is generated by displacement synthesis when DNA polymerase encounters the 5'-end of a downstream Okazaki fragment. It enters the flap from the 5'-end and then tracks to cleave the flap base, leaving a nick for ligation. Also involved in the long patch base excision repair (LP-BER) pathway, by cleaving within the apurinic/apyrimidinic (AP) site-terminated flap. Acts as a genome stabilization factor that prevents flaps from equilibrating into structures that lead to duplications and deletions. Also possesses 5'-3' exonuclease activity on nicked or gapped double-stranded DNA, and exhibits RNase H activity. Also involved in replication and repair of rDNA and in repairing mitochondrial DNA. The polypeptide is Flap endonuclease 1 (fen1) (Penicillium rubens (strain ATCC 28089 / DSM 1075 / NRRL 1951 / Wisconsin 54-1255) (Penicillium chrysogenum)).